The primary structure comprises 454 residues: Bifunctional protein GlmU (454 aa).

Residues 1-228 (MSPLHVVILA…PFEVQGVNNR (228 aa)) are pyrophosphorylase. Residues 9 to 12 (LAAG), K23, Q74, 79 to 80 (GT), 101 to 103 (YGD), G138, E153, N168, and N226 each bind UDP-N-acetyl-alpha-D-glucosamine. D103 contributes to the Mg(2+) binding site. Residue N226 participates in Mg(2+) binding. The linker stretch occupies residues 229-249 (LQLAELERWYQRQQAERLMTE). Positions 250–454 (GASLADPARI…IAGWERPKKA (205 aa)) are N-acetyltransferase. 2 residues coordinate UDP-N-acetyl-alpha-D-glucosamine: R332 and K350. The active-site Proton acceptor is the H362. Positions 365 and 376 each coordinate UDP-N-acetyl-alpha-D-glucosamine. Acetyl-CoA-binding positions include A379, 385 to 386 (NY), S404, A422, and R439.

It in the N-terminal section; belongs to the N-acetylglucosamine-1-phosphate uridyltransferase family. This sequence in the C-terminal section; belongs to the transferase hexapeptide repeat family. Homotrimer. Mg(2+) serves as cofactor.

It localises to the cytoplasm. The catalysed reaction is alpha-D-glucosamine 1-phosphate + acetyl-CoA = N-acetyl-alpha-D-glucosamine 1-phosphate + CoA + H(+). It catalyses the reaction N-acetyl-alpha-D-glucosamine 1-phosphate + UTP + H(+) = UDP-N-acetyl-alpha-D-glucosamine + diphosphate. The protein operates within nucleotide-sugar biosynthesis; UDP-N-acetyl-alpha-D-glucosamine biosynthesis; N-acetyl-alpha-D-glucosamine 1-phosphate from alpha-D-glucosamine 6-phosphate (route II): step 2/2. It participates in nucleotide-sugar biosynthesis; UDP-N-acetyl-alpha-D-glucosamine biosynthesis; UDP-N-acetyl-alpha-D-glucosamine from N-acetyl-alpha-D-glucosamine 1-phosphate: step 1/1. Its pathway is bacterial outer membrane biogenesis; LPS lipid A biosynthesis. Its function is as follows. Catalyzes the last two sequential reactions in the de novo biosynthetic pathway for UDP-N-acetylglucosamine (UDP-GlcNAc). The C-terminal domain catalyzes the transfer of acetyl group from acetyl coenzyme A to glucosamine-1-phosphate (GlcN-1-P) to produce N-acetylglucosamine-1-phosphate (GlcNAc-1-P), which is converted into UDP-GlcNAc by the transfer of uridine 5-monophosphate (from uridine 5-triphosphate), a reaction catalyzed by the N-terminal domain. The chain is Bifunctional protein GlmU from Marinobacter nauticus (strain ATCC 700491 / DSM 11845 / VT8) (Marinobacter aquaeolei).